The sequence spans 229 residues: PHO85 cyclin-5 (229 aa).

Over residues 1–24 (MDGNHRFTPDSKEFNTVVKSKESS) the composition is skewed to basic and acidic residues. The segment at 1-46 (MDGNHRFTPDSKEFNTVVKSKESSTGRNPYQTPPLEHNGTHHQTNY) is disordered.

This sequence belongs to the cyclin family. PCL1,2 subfamily. Forms a cyclin-CDK complex with PHO85.

Cyclin partner of the cyclin-dependent kinase (CDK) PHO85. Positively controls degradation of transcription factor GCN4 under favorable growth conditions. The PCL5-PHO85 cyclin-CDK holoenzyme phosphorylates GCN4, which is required for its degradation by the E3 ubiquitin ligase complex SCF(Cdc4). Amino acid starvation reduces PCL5-PHO85-associated GCN4 kinase activity and leads to stabilization of GCN4. This Saccharomyces cerevisiae (strain ATCC 204508 / S288c) (Baker's yeast) protein is PHO85 cyclin-5 (PCL5).